A 382-amino-acid polypeptide reads, in one-letter code: Alcohol dehydrogenase 4 (382 aa).

The protein belongs to the iron-containing alcohol dehydrogenase family. In terms of assembly, homodimer. The cofactor is Zn(2+). Fe(2+) serves as cofactor.

It localises to the mitochondrion. It catalyses the reaction a primary alcohol + NAD(+) = an aldehyde + NADH + H(+). The catalysed reaction is a secondary alcohol + NAD(+) = a ketone + NADH + H(+). Its activity is regulated as follows. Inhibited by EDTA. Reduces acetaldehyde to ethanol during glucose fermentation. Specific for ethanol. Shows drastically reduced activity towards primary alcohols from 4 carbon atoms upward. Isomers of aliphatic alcohol, as well as secondary alcohols and glycerol are not used at all. The protein is Alcohol dehydrogenase 4 (ADH4) of Saccharomyces cerevisiae (strain YJM789) (Baker's yeast).